Consider the following 557-residue polypeptide: Urocanate hydratase (557 aa).

NAD(+) contacts are provided by residues 52–53, Gln-130, 176–178, Glu-196, 242–243, 263–267, 273–274, and Tyr-322; these read GG, GMG, NA, QTSAH, and YL. Cys-410 is an active-site residue. Gly-492 serves as a coordination point for NAD(+).

Belongs to the urocanase family. Requires NAD(+) as cofactor.

The protein resides in the cytoplasm. The enzyme catalyses 4-imidazolone-5-propanoate = trans-urocanate + H2O. It participates in amino-acid degradation; L-histidine degradation into L-glutamate; N-formimidoyl-L-glutamate from L-histidine: step 2/3. In terms of biological role, catalyzes the conversion of urocanate to 4-imidazolone-5-propionate. The sequence is that of Urocanate hydratase from Rhizobium meliloti (strain 1021) (Ensifer meliloti).